Here is a 365-residue protein sequence, read N- to C-terminus: UDP-N-acetylglucosamine--N-acetylmuramyl-(pentapeptide) pyrophosphoryl-undecaprenol N-acetylglucosamine transferase (365 aa).

UDP-N-acetyl-alpha-D-glucosamine-binding positions include threonine 12–glycine 14, asparagine 128, arginine 169, serine 195, and glutamine 296.

Belongs to the glycosyltransferase 28 family. MurG subfamily.

It is found in the cell inner membrane. The enzyme catalyses di-trans,octa-cis-undecaprenyl diphospho-N-acetyl-alpha-D-muramoyl-L-alanyl-D-glutamyl-meso-2,6-diaminopimeloyl-D-alanyl-D-alanine + UDP-N-acetyl-alpha-D-glucosamine = di-trans,octa-cis-undecaprenyl diphospho-[N-acetyl-alpha-D-glucosaminyl-(1-&gt;4)]-N-acetyl-alpha-D-muramoyl-L-alanyl-D-glutamyl-meso-2,6-diaminopimeloyl-D-alanyl-D-alanine + UDP + H(+). It participates in cell wall biogenesis; peptidoglycan biosynthesis. Cell wall formation. Catalyzes the transfer of a GlcNAc subunit on undecaprenyl-pyrophosphoryl-MurNAc-pentapeptide (lipid intermediate I) to form undecaprenyl-pyrophosphoryl-MurNAc-(pentapeptide)GlcNAc (lipid intermediate II). In Gluconobacter oxydans (strain 621H) (Gluconobacter suboxydans), this protein is UDP-N-acetylglucosamine--N-acetylmuramyl-(pentapeptide) pyrophosphoryl-undecaprenol N-acetylglucosamine transferase.